We begin with the raw amino-acid sequence, 148 residues long: Deoxyuridine 5'-triphosphate nucleotidohydrolase (148 aa).

Substrate contacts are provided by residues 68–70, N81, 85–87, and K95; these read RSG and TID.

It belongs to the dUTPase family. Requires Mg(2+) as cofactor.

It catalyses the reaction dUTP + H2O = dUMP + diphosphate + H(+). It participates in pyrimidine metabolism; dUMP biosynthesis; dUMP from dCTP (dUTP route): step 2/2. This enzyme is involved in nucleotide metabolism: it produces dUMP, the immediate precursor of thymidine nucleotides and it decreases the intracellular concentration of dUTP so that uracil cannot be incorporated into DNA. This chain is Deoxyuridine 5'-triphosphate nucleotidohydrolase, found in Rickettsia felis (strain ATCC VR-1525 / URRWXCal2) (Rickettsia azadi).